Consider the following 164-residue polypeptide: MEARTTDLSDLYPEGEALPMVFKSFGGRARFAGRVRTLRVFEDNALVRKVLEEEGAGQVLFVDGGGSLRTALLGGNLARLAWERGWAGVVVHGAVRDTEELRGVPIGLLALAATPKKSAKEGKGEVDVPLKVLGVEVLPGSFLLADEDGLLLLPEPPSGVRSGG.

Residues 74–77 and Arg-96 each bind substrate; that span reads GGNL. Asp-97 serves as a coordination point for a divalent metal cation.

Belongs to the class II aldolase/RraA-like family. Homotrimer. It depends on a divalent metal cation as a cofactor.

The catalysed reaction is 4-hydroxy-4-methyl-2-oxoglutarate = 2 pyruvate. It carries out the reaction oxaloacetate + H(+) = pyruvate + CO2. Its function is as follows. Catalyzes the aldol cleavage of 4-hydroxy-4-methyl-2-oxoglutarate (HMG) into 2 molecules of pyruvate. Also contains a secondary oxaloacetate (OAA) decarboxylase activity due to the common pyruvate enolate transition state formed following C-C bond cleavage in the retro-aldol and decarboxylation reactions. The polypeptide is Putative 4-hydroxy-4-methyl-2-oxoglutarate aldolase (Thermus thermophilus (strain ATCC BAA-163 / DSM 7039 / HB27)).